We begin with the raw amino-acid sequence, 161 residues long: Gamma-glutamylaminecyclotransferase A (161 aa).

Residue 26–29 participates in substrate binding; the sequence is YGTL. The active-site Proton acceptor is Glu-101.

It belongs to the gamma-glutamylcyclotransferase family.

It catalyses the reaction epsilon-(gamma-L-glutamyl)-L-lysine = 5-oxo-L-proline + L-lysine. May contribute to degradation of proteins cross-linked by transglutaminases by degrading the cross-link between a lysine and a glutamic acid residue. Catalyzes the formation of 5-oxo-L-proline from L-gamma-glutamyl-L-epsilon-lysine. The protein is Gamma-glutamylaminecyclotransferase A (ggact.1) of Danio rerio (Zebrafish).